The following is a 212-amino-acid chain: Phosphatidylserine decarboxylase proenzyme (212 aa).

Catalysis depends on Ser182, which acts as the Schiff-base intermediate with substrate; via pyruvic acid. At Ser182 the chain carries Pyruvic acid (Ser); by autocatalysis.

This sequence belongs to the phosphatidylserine decarboxylase family. PSD-A subfamily. In terms of assembly, heterodimer of a large membrane-associated beta subunit and a small pyruvoyl-containing alpha subunit. Requires pyruvate as cofactor. Is synthesized initially as an inactive proenzyme. Formation of the active enzyme involves a self-maturation process in which the active site pyruvoyl group is generated from an internal serine residue via an autocatalytic post-translational modification. Two non-identical subunits are generated from the proenzyme in this reaction, and the pyruvate is formed at the N-terminus of the alpha chain, which is derived from the carboxyl end of the proenzyme. The post-translation cleavage follows an unusual pathway, termed non-hydrolytic serinolysis, in which the side chain hydroxyl group of the serine supplies its oxygen atom to form the C-terminus of the beta chain, while the remainder of the serine residue undergoes an oxidative deamination to produce ammonia and the pyruvoyl prosthetic group on the alpha chain.

It localises to the cell membrane. It carries out the reaction a 1,2-diacyl-sn-glycero-3-phospho-L-serine + H(+) = a 1,2-diacyl-sn-glycero-3-phosphoethanolamine + CO2. It functions in the pathway phospholipid metabolism; phosphatidylethanolamine biosynthesis; phosphatidylethanolamine from CDP-diacylglycerol: step 2/2. Catalyzes the formation of phosphatidylethanolamine (PtdEtn) from phosphatidylserine (PtdSer). The chain is Phosphatidylserine decarboxylase proenzyme from Chlorobium limicola (strain DSM 245 / NBRC 103803 / 6330).